The following is a 347-amino-acid chain: Phosphoribosylformylglycinamidine cyclo-ligase (347 aa).

The protein belongs to the AIR synthase family.

It is found in the cytoplasm. It carries out the reaction 2-formamido-N(1)-(5-O-phospho-beta-D-ribosyl)acetamidine + ATP = 5-amino-1-(5-phospho-beta-D-ribosyl)imidazole + ADP + phosphate + H(+). It functions in the pathway purine metabolism; IMP biosynthesis via de novo pathway; 5-amino-1-(5-phospho-D-ribosyl)imidazole from N(2)-formyl-N(1)-(5-phospho-D-ribosyl)glycinamide: step 2/2. This chain is Phosphoribosylformylglycinamidine cyclo-ligase, found in Desulfatibacillum aliphaticivorans.